A 349-amino-acid polypeptide reads, in one-letter code: ATPase GET3 (349 aa).

26–33 serves as a coordination point for ATP; that stretch reads KGGVGKTT. The active site involves Asp57. 2 residues coordinate ATP: Glu242 and Asn269. Cys281 and Cys284 together coordinate Zn(2+).

This sequence belongs to the arsA ATPase family. Homodimer. Component of the Golgi to ER traffic (GET) complex, which is composed of GET1, GET2 and GET3. Within the complex, GET1 and GET2 form a heterotetramer which is stabilized by phosphatidylinositol binding and which binds to the GET3 homodimer. Interacts with the chloride channel protein GEF1.

The protein resides in the cytoplasm. It localises to the endoplasmic reticulum. Its subcellular location is the golgi apparatus. In terms of biological role, ATPase required for the post-translational delivery of tail-anchored (TA) proteins to the endoplasmic reticulum. Recognizes and selectively binds the transmembrane domain of TA proteins in the cytosol. This complex then targets to the endoplasmic reticulum by membrane-bound receptors GET1 and GET2, where the tail-anchored protein is released for insertion. This process is regulated by ATP binding and hydrolysis. ATP binding drives the homodimer towards the closed dimer state, facilitating recognition of newly synthesized TA membrane proteins. ATP hydrolysis is required for insertion. Subsequently, the homodimer reverts towards the open dimer state, lowering its affinity for the GET1-GET2 receptor, and returning it to the cytosol to initiate a new round of targeting. Cooperates with the HDEL receptor ERD2 to mediate the ATP-dependent retrieval of resident ER proteins that contain a C-terminal H-D-E-L retention signal from the Golgi to the ER. Involved in low-level resistance to the oxyanions arsenite and arsenate, and in heat tolerance. In Candida tropicalis (strain ATCC MYA-3404 / T1) (Yeast), this protein is ATPase GET3.